The following is a 1029-amino-acid chain: Chitin synthase 2 (1029 aa).

Disordered stretches follow at residues 1–160, 174–216, and 234–257; these read MDRP…GARS, SDVD…SHLR, and AHYGPAPAEGDQQRRGVREPQKSR. Over residues 61–77 the composition is skewed to low complexity; it reads PSVSSIHSRPSSISNIP. Positions 244–257 are enriched in basic and acidic residues; it reads DQQRRGVREPQKSR. Residue N348 is glycosylated (N-linked (GlcNAc...) asparagine). Transmembrane regions (helical) follow at residues 639–659, 681–701, 716–736, 752–772, 791–811, 820–840, 918–938, and 952–972; these read WLNGAFFAAIYSLVHFRQLWA, VLFTFFSLANFYLTFYFVAGG, LYIFTILRYTLILLICAQFIL, SMVIYGIVMVYTTFAAFYIVI, NLIVSMASTIGLYFLMSFIYL, SIQYFMLLPSYLCTLQVYAFC, YMVVSWMIANGILGMAVSEIY, and ILWSVASLALFRALGSTTFAI.

Belongs to the chitin synthase family. Class II subfamily.

It is found in the cell membrane. The enzyme catalyses [(1-&gt;4)-N-acetyl-beta-D-glucosaminyl](n) + UDP-N-acetyl-alpha-D-glucosamine = [(1-&gt;4)-N-acetyl-beta-D-glucosaminyl](n+1) + UDP + H(+). Its function is as follows. Polymerizes chitin, a structural polymer of the cell wall and septum, by transferring the sugar moiety of UDP-GlcNAc to the non-reducing end of the growing chitin polymer. Plays an important role in cell wall integrity and has distinct functions in invasive hyphae and vegetative hyphae, but is not involved in plant infection. The chain is Chitin synthase 2 from Pyricularia oryzae (strain 70-15 / ATCC MYA-4617 / FGSC 8958) (Rice blast fungus).